The chain runs to 635 residues: Extracellular metalloproteinase 9 (635 aa).

Positions 1-19 are cleaved as a signal peptide; that stretch reads MHGLLLAAGLLTLPLRALA. Positions 20-246 are excised as a propeptide; it reads HPGHQSTSIL…IHGVTDYVAD (227 aa). N-linked (GlcNAc...) asparagine glycosylation occurs at N274. The disordered stretch occupies residues 279–307; the sequence is TWHSDGNTRYPTTRGNNGIAQDNPSGGTG. N413 carries N-linked (GlcNAc...) asparagine glycosylation. H430 is a Zn(2+) binding site. E431 is an active-site residue. A Zn(2+)-binding site is contributed by H434. N475 carries an N-linked (GlcNAc...) asparagine glycan.

The protein belongs to the peptidase M36 family. It depends on Zn(2+) as a cofactor.

It localises to the secreted. Functionally, secreted metalloproteinase that allows assimilation of proteinaceous substrates. This chain is Extracellular metalloproteinase 9 (MEP9), found in Uncinocarpus reesii (strain UAMH 1704).